Here is an 842-residue protein sequence, read N- to C-terminus: Elongation factor 2 (842 aa).

In terms of domain architecture, tr-type G spans 17-253 (TNVRNMSVIA…LWGDSYFNPK (237 aa)). Residues 26-33 (AHVDHGKS), 158-161 (NKVD), and 213-215 (SGL) contribute to the GTP site. The residue at position 699 (histidine 699) is a Diphthamide.

The protein belongs to the TRAFAC class translation factor GTPase superfamily. Classic translation factor GTPase family. EF-G/EF-2 subfamily.

It is found in the cytoplasm. It catalyses the reaction GTP + H2O = GDP + phosphate + H(+). Its function is as follows. Catalyzes the GTP-dependent ribosomal translocation step during translation elongation. During this step, the ribosome changes from the pre-translocational (PRE) to the post-translocational (POST) state as the newly formed A-site-bound peptidyl-tRNA and P-site-bound deacylated tRNA move to the P and E sites, respectively. Catalyzes the coordinated movement of the two tRNA molecules, the mRNA and conformational changes in the ribosome. In Debaryomyces hansenii (strain ATCC 36239 / CBS 767 / BCRC 21394 / JCM 1990 / NBRC 0083 / IGC 2968) (Yeast), this protein is Elongation factor 2 (EFT1).